Consider the following 249-residue polypeptide: Proteasome activator complex subunit 1 (249 aa).

Residues 55–102 form a disordered region; sequence SNLKAPLDIPVPDPVKEKEKEERRKQQEKEDKDEKKKGEDEDKGPPCG. Residues 68–98 show a composition bias toward basic and acidic residues; it reads PVKEKEKEERRKQQEKEDKDEKKKGEDEDKG.

It belongs to the PA28 family. In terms of assembly, heterodimer of PSME1 and PSME2, which forms a hexameric ring. PSME1 can form homoheptamers.

In terms of biological role, implicated in immunoproteasome assembly and required for efficient antigen processing. The PA28 activator complex enhances the generation of class I binding peptides by altering the cleavage pattern of the proteasome. The polypeptide is Proteasome activator complex subunit 1 (PSME1) (Bos taurus (Bovine)).